Consider the following 392-residue polypeptide: Pyoverdine export membrane fusion protein PvdR (392 aa).

Residues 1–36 (MRRSTHTRRRLLLGGLGLLGLGSLLAWTSLPFGAQP) constitute a signal peptide (tat-type signal). Residues 109–181 (IDNLKAQLAE…NASLRSDEAE (73 aa)) are a coiled coil. The segment at 267-286 (PPKPLDQTSQGGGSPASATA) is disordered.

It belongs to the membrane fusion protein (MFP) (TC 8.A.1) family. As to quaternary structure, part of the tripartite efflux system PvdRT-OpmQ, which is composed of an inner membrane component with both ATPase and permease domains, PvdT, a periplasmic membrane fusion protein, PvdR, and an outer membrane component, OpmQ. In terms of processing, predicted to be exported by the Tat system. The position of the signal peptide cleavage has not been experimentally proven.

The protein localises to the periplasm. Its function is as follows. Part of the tripartite efflux system PvdRT-OpmQ required for the secretion into the extracellular milieu of the siderophore pyoverdine (PVD), which is involved in iron acquisition. This subunit is an adapter protein that stimulates the ATPase activity of PvdT and connects the inner and outer membrane components. The system is responsible for export of newly synthesized PVD after the final steps of biosynthesis have taken place in the periplasm. It is also responsible for recycling of PVD after internalization of ferri-PVD into the periplasm by the outer-membrane receptor FpvA and release of iron from PVD, thus making PVD available for new cycles of iron uptake. Contributes to resistance against ampicillin. This is Pyoverdine export membrane fusion protein PvdR from Pseudomonas putida (strain ATCC 47054 / DSM 6125 / CFBP 8728 / NCIMB 11950 / KT2440).